Here is a 295-residue protein sequence, read N- to C-terminus: MRHLITTKDFNKVEIMELFKEASDFLDEKPRTFLEGKSITTIFFENSTRTLSSFESAARRLGARVLRLDVSRSSSSKGETLYDTAANLDAMSPNAIVVRHANSGVPLILAKHMHCPVVNGGDGKHAHPTQALLDLFTIYNHFQGNVEGKKICIVGDIKNSRVAASNIELLSRFNLDITLVAPPHFMPNTHLKKHYKLDENIIANSDIIMSLRTQTERHNKTVYASLKDYANDFCIQKSLAKDKKLILLHPGPVNRNIDISDEMMSDERTLVLKQVKNGVAIRMAVLKKLILENEG.

2 residues coordinate carbamoyl phosphate: R49 and T50. L-aspartate is bound at residue K77. The carbamoyl phosphate site is built by R99, H127, and Q130. 2 residues coordinate L-aspartate: R161 and R212. Residues G251 and P252 each contribute to the carbamoyl phosphate site.

Belongs to the aspartate/ornithine carbamoyltransferase superfamily. ATCase family. Heterododecamer (2C3:3R2) of six catalytic PyrB chains organized as two trimers (C3), and six regulatory PyrI chains organized as three dimers (R2).

It catalyses the reaction carbamoyl phosphate + L-aspartate = N-carbamoyl-L-aspartate + phosphate + H(+). It functions in the pathway pyrimidine metabolism; UMP biosynthesis via de novo pathway; (S)-dihydroorotate from bicarbonate: step 2/3. Its function is as follows. Catalyzes the condensation of carbamoyl phosphate and aspartate to form carbamoyl aspartate and inorganic phosphate, the committed step in the de novo pyrimidine nucleotide biosynthesis pathway. The polypeptide is Aspartate carbamoyltransferase catalytic subunit (Campylobacter jejuni (strain RM1221)).